The following is a 359-amino-acid chain: 4-hydroxy-tetrahydrodipicolinate synthase, chloroplastic (359 aa).

Residues 1 to 33 constitute a chloroplast transit peptide; sequence MSSSIIGRCHFVADSIEAAGTKRRTTRWRSPRA. Threonine 102 lines the pyruvate pocket. Tyrosine 188 (proton donor/acceptor) is an active-site residue. Lysine 216 serves as the catalytic Schiff-base intermediate with substrate. Position 255 (isoleucine 255) interacts with pyruvate.

It belongs to the DapA family.

Its subcellular location is the plastid. It localises to the chloroplast. It carries out the reaction L-aspartate 4-semialdehyde + pyruvate = (2S,4S)-4-hydroxy-2,3,4,5-tetrahydrodipicolinate + H2O + H(+). It participates in amino-acid biosynthesis; L-lysine biosynthesis via DAP pathway; (S)-tetrahydrodipicolinate from L-aspartate: step 3/4. In terms of biological role, catalyzes the condensation of (S)-aspartate-beta-semialdehyde [(S)-ASA] and pyruvate to 4-hydroxy-tetrahydrodipicolinate (HTPA). In Nicotiana tabacum (Common tobacco), this protein is 4-hydroxy-tetrahydrodipicolinate synthase, chloroplastic (DHPS1).